The chain runs to 222 residues: Protein GrpE (222 aa).

Positions 1-21 (MSDEKNKFTDASFENCDLKNP) are disordered.

It belongs to the GrpE family. As to quaternary structure, homodimer.

The protein resides in the cytoplasm. Participates actively in the response to hyperosmotic and heat shock by preventing the aggregation of stress-denatured proteins, in association with DnaK and GrpE. It is the nucleotide exchange factor for DnaK and may function as a thermosensor. Unfolded proteins bind initially to DnaJ; upon interaction with the DnaJ-bound protein, DnaK hydrolyzes its bound ATP, resulting in the formation of a stable complex. GrpE releases ADP from DnaK; ATP binding to DnaK triggers the release of the substrate protein, thus completing the reaction cycle. Several rounds of ATP-dependent interactions between DnaJ, DnaK and GrpE are required for fully efficient folding. The chain is Protein GrpE from Bartonella tribocorum (strain CIP 105476 / IBS 506).